A 706-amino-acid polypeptide reads, in one-letter code: Double-strand break repair protein MRE11 (706 aa).

Serine 2 carries the N-acetylserine modification. The residue at position 2 (serine 2) is a Phosphoserine. Residues aspartate 20, histidine 22, and aspartate 60 each contribute to the Mn(2+) site. Residues 87-117 form an interaction with NBN region; it reads RPVQFEVISDQSVNFGFSKFPWVNYQDGNLN. Mn(2+) is bound at residue asparagine 128. Histidine 129 acts as the Proton donor in catalysis. The Mn(2+) site is built by histidine 217, histidine 245, and histidine 247. Lysine 255 is covalently cross-linked (Glycyl lysine isopeptide (Lys-Gly) (interchain with G-Cter in SUMO2)). A Phosphoserine modification is found at serine 275. Lysine 282 is covalently cross-linked (Glycyl lysine isopeptide (Lys-Gly) (interchain with G-Cter in UFM1)). Lysine 339 participates in a covalent cross-link: Glycyl lysine isopeptide (Lys-Gly) (interchain with G-Cter in ubiquitin). Glycyl lysine isopeptide (Lys-Gly) (interchain with G-Cter in SUMO) cross-links involve residues lysine 384 and lysine 468. Lysine 481 participates in a covalent cross-link: Glycyl lysine isopeptide (Lys-Gly) (interchain with G-Cter in ubiquitin). Residues 505-514 show a composition bias toward basic and acidic residues; that stretch reads FRESRQRNTN. The segment at 505–706 is disordered; it reads FRESRQRNTN…SSSCPRRNRR (202 aa). Positions 531-541 are enriched in polar residues; it reads RSQSETSTSAF. The segment covering 569-579 has biased composition (basic residues); it reads GRGRGRGRRGA. 9 positions are modified to asymmetric dimethylarginine: arginine 570, arginine 572, arginine 574, arginine 576, arginine 577, arginine 580, arginine 587, arginine 592, and arginine 594. The GAR motif lies at 570–594; it reads RGRGRGRRGARGQSSAPRGGSQRGR. A compositionally biased stretch (low complexity) spans 580-589; it reads RGQSSAPRGG. Over residues 603-617 the composition is skewed to polar residues; sequence RGRSSKATSSTSRNM. 3 positions are modified to phosphoserine: serine 618, serine 640, and serine 648. The segment covering 643–653 has biased composition (acidic residues); sequence IEVDDSDEDDI. The span at 655–679 shows a compositional bias: polar residues; it reads PTNSRADQRWSGTTSSKRMSQSQTA. Lysine 671 is subject to N6-lactoyllysine. Serine 674, serine 676, serine 686, and serine 699 each carry phosphoserine. Positions 684 to 694 are enriched in acidic residues; the sequence is FESDEDDDDDP.

It belongs to the MRE11/RAD32 family. As to quaternary structure, component of the MRN complex composed of two heterodimers RAD50 and MRE11 associated with a single NBN. The MRN complexes dimerize on DNA to form joined MRN-MRN oligomers required for DNA double-strand break repair. As part of the MRN complex, interacts with MCM9; the interaction recruits the complex to DNA repair sites. Component of the BASC complex, at least composed of BRCA1, MSH2, MSH6, MLH1, ATM, BLM, RAD50, MRE11 and NBN. Found in a complex with TERF2. Interacts with DCLRE1C/Artemis and DCLRE1B/Apollo. Interacts with ATF2. Interacts with EXD2. Interacts with MRNIP. Interacts with SAMHD1; leading to stimulate 3'-5' exonuclease activity. Interacts (when ubiquitinated) with UBQLN4 (via its UBA domain). Interacts with CYREN (via XLF motif). Interacts with GFI1; promoting methylation by PRMT1. Interacts with DYNLL1; inhibiting the activity of MRE11. Interacts with C1QBP and RAD50; interaction takes place in absence of DNA damage to form the MRC (MRE11-RAD50-C1QBP) complex that inhibits the activity of MRE11. Interacts with AGER/RAGE; AGER is recruited to DNA double-strand break sites where it enhances MRE11 endonuclease activity to promote DNA repair. Mn(2+) serves as cofactor. Phosphorylated by ATM at Ser-674 and Ser-676 in response to DNA damage, promoting MRE11 activity: phosphorylation activates MRE11 by preventing the interaction between MRE11 and the C1QBP inhibitor. Phosphorylation at Ser-648 by PLK1 primes for phosphorylation at Ser-686 by CK2, inhibiting recruitment of the MRN complex to DNA damage sites. In terms of processing, asymmetric dimethylation by PRMT1 promotes MRE11 exonuclease activity. Post-translationally, lactylation at Lys-671 by CREBBP/CBP in response to DNA damage promotes DNA binding and MRE11 activity. Acetylated on lysine residues by KAT2A /GCN5. In terms of processing, ubiquitinated following DNA damage. Ubiquitination triggers interaction with UBQLN4, leading to MRE11 removal from chromatin and degradation by the proteasome. Ubiquitinated at Lys-339 and Lys-481 by RNF126 via 'Lys-27'- and 'Lys-29'-linked polyubiquitin chains, promoting the exonuclease activity of MRE11. Post-translationally, SUMOylated by PIAS1, stabilizing MRE11 on chromatin during end resection. DeSUMOylated by SENP3 following removal from DNA double-strand breaks (DSBs). Ufmylation at Lys-282 promotes MRE11 activity and is required for activation of the ATM and ATR kinases by the MRN complex.

Its subcellular location is the nucleus. The protein localises to the chromosome. The protein resides in the telomere. Interaction with SAMHD1 stimulates the double-strand-specific 3'-5' exonuclease activity. RBBP8/CtIP specifically promotes the endonuclease activity to clear protein-DNA adducts and generate clean double-strand break ends. DYNLL1-binding inhibits the activity of MRE11. MRE11 activity is inhibited by C1QBP: in absence of DNA damage, C1QBP interacts with unphosphorylated MRE11, preventing formation and activity of the MRN complex. Its function is as follows. Core component of the MRN complex, which plays a central role in double-strand break (DSB) repair, DNA recombination, maintenance of telomere integrity and meiosis. The MRN complex is involved in the repair of DNA double-strand breaks (DSBs) via homologous recombination (HR), an error-free mechanism which primarily occurs during S and G2 phases. The complex (1) mediates the end resection of damaged DNA, which generates proper single-stranded DNA, a key initial steps in HR, and is (2) required for the recruitment of other repair factors and efficient activation of ATM and ATR upon DNA damage. Within the MRN complex, MRE11 possesses both single-strand endonuclease activity and double-strand-specific 3'-5' exonuclease activity. After DSBs, MRE11 is loaded onto DSBs sites and cleaves DNA by cooperating with RBBP8/CtIP to initiate end resection. MRE11 first endonucleolytically cleaves the 5' strand at DNA DSB ends to prevent non-homologous end joining (NHEJ) and licence HR. It then generates a single-stranded DNA gap via 3' to 5' exonucleolytic degradation to create entry sites for EXO1- and DNA2-mediated 5' to 3' long-range resection, which is required for single-strand invasion and recombination. RBBP8/CtIP specifically promotes the endonuclease activity of MRE11 to clear protein-DNA adducts and generate clean double-strand break ends. MRE11 endonuclease activity is also enhanced by AGER/RAGE. The MRN complex is also required for DNA damage signaling via activation of the ATM and ATR kinases: the nuclease activity of MRE11 is not required to activate ATM and ATR. The MRN complex is also required for the processing of R-loops. The MRN complex is involved in the activation of the cGAS-STING pathway induced by DNA damage during tumorigenesis: the MRN complex acts by displacing CGAS from nucleosome sequestration, thereby activating it. In telomeres the MRN complex may modulate t-loop formation. In Mus musculus (Mouse), this protein is Double-strand break repair protein MRE11.